The primary structure comprises 290 residues: MIRNQVEMFAYAKINLALAITGRRPDGYHELESVMQSIGIYDRIRVTLAEGGIQCSCGEWSGPENLAYRAAEAFLSGLGSSQGIHIDIEKNIPVQAGLGGGSADAAAALQALNKLFKEPYTEEELKSFAAQLGADVAFCLKGGTQWATGVGEELKGLPHAPKINLVLIKPDQGVNTAEAYRAFDQEGKFSHLDYAGWQEALASGRAESLIPLLYNDLEPASMKLLPEIAWVKEELMKQNGCLGALMSGSGSAVFGIVQTEEQAEKIAAIWRERNYHVWVTHTMERGNIYG.

Lys13 is a catalytic residue. 93–103 (PVQAGLGGGSA) contacts ATP. Residue Asp135 is part of the active site.

This sequence belongs to the GHMP kinase family. IspE subfamily.

It catalyses the reaction 4-CDP-2-C-methyl-D-erythritol + ATP = 4-CDP-2-C-methyl-D-erythritol 2-phosphate + ADP + H(+). The protein operates within isoprenoid biosynthesis; isopentenyl diphosphate biosynthesis via DXP pathway; isopentenyl diphosphate from 1-deoxy-D-xylulose 5-phosphate: step 3/6. Its function is as follows. Catalyzes the phosphorylation of the position 2 hydroxy group of 4-diphosphocytidyl-2C-methyl-D-erythritol. The chain is 4-diphosphocytidyl-2-C-methyl-D-erythritol kinase from Desulfitobacterium hafniense (strain Y51).